A 280-amino-acid polypeptide reads, in one-letter code: uncharacterized protein (280 aa).

The KilA-N domain occupies 26 to 127 (YFMSMKLLDV…TRVSILMRYY (102 aa)).

This is an uncharacterized protein from Vertebrata (FPV).